The sequence spans 348 residues: MNPVVLTIIISSLGLGTMMTFIGSHWLLVWMGLEINTLAIIPLMIRQHHPRAVEATTKYFLTQATASALLLFASITNAWSLGEWSLLEMLNPTSATLVTIALALKIGLAPMHFWLPEVLQGLDLITGLILATWQKLAPFAILLQLHPMLNSNLLLFLGVSSTVIGGWGGLNQTQLRKILAYSSIAHLGWMITILHYSPNLTQLNLALYIIMTLTTFLLFKLFNSTKINSIAISTIKSPLLSIIALITLLSLGGLPPLSGFMPKWLILQELTKQDLAIPATIMALAALLSLFFYLRLCYSTTLTMSPNSIYLSSSWRTKSLQPNLILMMATSLSILLLPLTPTIFMLTL.

The next 11 helical transmembrane spans lie at Pro3–Gly23, His25–Ile45, Ser67–Leu87, Ala95–Leu115, Val118–Pro138, Leu149–Asn171, Ile178–Pro198, Leu203–Asn223, Leu240–Phe260, Asp274–Leu294, and Leu324–Phe344.

This sequence belongs to the complex I subunit 2 family.

Its subcellular location is the mitochondrion inner membrane. The enzyme catalyses a ubiquinone + NADH + 5 H(+)(in) = a ubiquinol + NAD(+) + 4 H(+)(out). Its function is as follows. Core subunit of the mitochondrial membrane respiratory chain NADH dehydrogenase (Complex I) that is believed to belong to the minimal assembly required for catalysis. Complex I functions in the transfer of electrons from NADH to the respiratory chain. The immediate electron acceptor for the enzyme is believed to be ubiquinone. In Squalus acanthias (Spiny dogfish), this protein is NADH-ubiquinone oxidoreductase chain 2 (MT-ND2).